Consider the following 352-residue polypeptide: Probable dual-specificity RNA methyltransferase RlmN (352 aa).

The active-site Proton acceptor is the Glu-93. Residues 99-332 form the Radical SAM core domain; that stretch reads TAKRLTVCVS…ATVRQTRGLD (234 aa). A disulfide bridge links Cys-106 with Cys-337. Residues Cys-113, Cys-117, and Cys-120 each coordinate [4Fe-4S] cluster. S-adenosyl-L-methionine is bound by residues 160–161, Ser-190, 213–215, and Asn-294; these read GE and SLH. The S-methylcysteine intermediate role is filled by Cys-337.

The protein belongs to the radical SAM superfamily. RlmN family. Requires [4Fe-4S] cluster as cofactor.

The protein resides in the cytoplasm. The catalysed reaction is adenosine(2503) in 23S rRNA + 2 reduced [2Fe-2S]-[ferredoxin] + 2 S-adenosyl-L-methionine = 2-methyladenosine(2503) in 23S rRNA + 5'-deoxyadenosine + L-methionine + 2 oxidized [2Fe-2S]-[ferredoxin] + S-adenosyl-L-homocysteine. The enzyme catalyses adenosine(37) in tRNA + 2 reduced [2Fe-2S]-[ferredoxin] + 2 S-adenosyl-L-methionine = 2-methyladenosine(37) in tRNA + 5'-deoxyadenosine + L-methionine + 2 oxidized [2Fe-2S]-[ferredoxin] + S-adenosyl-L-homocysteine. Specifically methylates position 2 of adenine 2503 in 23S rRNA and position 2 of adenine 37 in tRNAs. This is Probable dual-specificity RNA methyltransferase RlmN from Synechococcus sp. (strain JA-2-3B'a(2-13)) (Cyanobacteria bacterium Yellowstone B-Prime).